The chain runs to 503 residues: ATP synthase subunit alpha, chloroplastic (503 aa).

ATP is bound at residue glycine 170–threonine 177.

This sequence belongs to the ATPase alpha/beta chains family. In terms of assembly, F-type ATPases have 2 components, CF(1) - the catalytic core - and CF(0) - the membrane proton channel. CF(1) has five subunits: alpha(3), beta(3), gamma(1), delta(1), epsilon(1). CF(0) has four main subunits: a, b, b' and c.

It is found in the plastid. The protein resides in the chloroplast thylakoid membrane. It catalyses the reaction ATP + H2O + 4 H(+)(in) = ADP + phosphate + 5 H(+)(out). Its function is as follows. Produces ATP from ADP in the presence of a proton gradient across the membrane. The alpha chain is a regulatory subunit. The protein is ATP synthase subunit alpha, chloroplastic of Gracilaria tenuistipitata var. liui (Red alga).